Consider the following 494-residue polypeptide: MKKIAIIGRPNVGKSSLFNRLMKKRDAITSDVAGTTRDVKRRHVVIINKEALLLDTGGLDQGCELFDKIKEKSLEAAKKADIILYMVDGKSIPEDADKKLFYELQTLGKEVALVVNKIDNDKLKDNLWDFYEFGTDAIFGISVSHNRSVNALLEWIYDRLPEEDIIKDEDEEDDVNIVEEDDEEFEFDDKEYNEEEEDDNFFYPEDDEDEEFEDDSIFAQNDRIKEFDETDANHIKISIIGRTNVGKSSLLNALLGEERSVVSSVAGTTIDPIDESMEYKDKQLTFVDTAGLRRRGKIVGIEKFALMRTKEMLENSNMALVVLDASEPFLDLDEKIAGLVDSNRLACIIVLNKWDIANRDEYDKIIQEVRDRFKFLAYAPIVTLSAKSHRRVDKLFDMILEIDKNYSQHIKTSELNVVLEKALRRHQLPSMRGQIIRIYYATQYETRPPKIAIVMNKPRGLHFTYRRYLTNKLREAFSFSGTPVLFKAKKRGEK.

EngA-type G domains lie at 2-164 (KKIA…PEED) and 235-407 (IKIS…KNYS). GTP-binding positions include 8–15 (GRPNVGKS), 55–59 (DTGGL), 116–119 (NKID), 241–248 (GRTNVGKS), 288–292 (DTAGL), and 352–355 (NKWD). Positions 408–492 (QHIKTSELNV…PVLFKAKKRG (85 aa)) constitute a KH-like domain.

The protein belongs to the TRAFAC class TrmE-Era-EngA-EngB-Septin-like GTPase superfamily. EngA (Der) GTPase family. As to quaternary structure, associates with the 50S ribosomal subunit.

GTPase that plays an essential role in the late steps of ribosome biogenesis. The sequence is that of GTPase Der from Sulfurimonas denitrificans (strain ATCC 33889 / DSM 1251) (Thiomicrospira denitrificans (strain ATCC 33889 / DSM 1251)).